We begin with the raw amino-acid sequence, 271 residues long: Ribonuclease HII (271 aa).

Residues 84–271 (VLIAGVDEVG…HRMSFLSNYI (188 aa)) form the RNase H type-2 domain. Residues aspartate 90, glutamate 91, and aspartate 187 each contribute to the a divalent metal cation site.

It belongs to the RNase HII family. Requires Mn(2+) as cofactor. Mg(2+) is required as a cofactor.

Its subcellular location is the cytoplasm. It carries out the reaction Endonucleolytic cleavage to 5'-phosphomonoester.. Its function is as follows. Endonuclease that specifically degrades the RNA of RNA-DNA hybrids. This Clostridium tetani (strain Massachusetts / E88) protein is Ribonuclease HII.